The following is a 153-amino-acid chain: Natriuretic peptides A (153 aa).

An N-terminal signal peptide occupies residues Met1–Ala25. 2 propeptides span residues Asn26–Arg123 and Asp93–Asp103. The interval Glu54–Ser105 is disordered. Ser129 bears the Phosphoserine mark. Cys130 and Cys146 are oxidised to a cystine. The interval Asn147–Tyr151 is important for degradation of atrial natriuretic peptide by IDE.

Belongs to the natriuretic peptide family. As to quaternary structure, homodimer; disulfide-linked antiparallel dimer. In terms of processing, the precursor molecule is proteolytically cleaved by CORIN at Arg-123 to produce the atrial natriuretic peptide. Undergoes further proteolytic cleavage by unknown proteases to give rise to long-acting natriuretic peptide, vessel dilator and kaliuretic peptide. Additional processing gives rise to the auriculin and atriopeptin peptides. In the kidneys, alternative processing by an unknown protease results in the peptide urodilatin. Post-translationally, cleavage by MME initiates degradation of the factor and thereby regulates its activity. Degradation by IDE results in reduced activation of NPR1 (in vitro). During IDE degradation, the resulting products can temporarily stimulate NPR2 to produce cGMP, before the fragments are completely degraded and inactivated by IDE (in vitro). Degraded by IDE. In terms of processing, phosphorylation on Ser-129 decreases vasorelaxant activity.

The protein resides in the secreted. It localises to the perikaryon. Its subcellular location is the cell projection. Its function is as follows. Hormone that plays a key role in mediating cardio-renal homeostasis, and is involved in vascular remodeling and regulating energy metabolism. Acts by specifically binding and stimulating NPR1 to produce cGMP, which in turn activates effector proteins, such as PRKG1, that drive various biological responses. Regulates vasodilation, natriuresis, diuresis and aldosterone synthesis and is therefore essential for regulating blood pressure, controlling the extracellular fluid volume and maintaining the fluid-electrolyte balance. Also involved in inhibiting cardiac remodeling and cardiac hypertrophy by inducing cardiomyocyte apoptosis and attenuating the growth of cardiomyocytes and fibroblasts. Plays a role in female pregnancy by promoting trophoblast invasion and spiral artery remodeling in uterus, and thus prevents pregnancy-induced hypertension. In adipose tissue, acts in various cGMP- and PKG-dependent pathways to regulate lipid metabolism and energy homeostasis. This includes up-regulating lipid metabolism and mitochondrial oxygen utilization by activating the AMP-activated protein kinase (AMPK), and increasing energy expenditure by acting via MAPK11 to promote the UCP1-dependent thermogenesis of brown adipose tissue. Binds the clearance receptor NPR3 which removes the hormone from circulation. In terms of biological role, may have a role in cardio-renal homeostasis through regulation of natriuresis, diuresis, vasodilation, and inhibiting aldosterone synthesis. In vitro, promotes the production of cGMP and induces vasodilation. May promote natriuresis, at least in part, by enhancing prostaglandin E2 synthesis resulting in the inhibition of renal Na+-K+-ATPase. However reports on the involvement of this peptide in mammal blood volume and blood pressure homeostasis are conflicting; according to a report, in vivo it is not sufficient to activate cGMP and does not inhibit collecting duct transport nor effect diuresis and natriuresis. Appears to bind to specific receptors that are distinct from the receptors bound by atrial natriuretic peptide and vessel dilator. Possibly enhances protein excretion in urine by decreasing proximal tubular protein reabsorption. May have a role in cardio-renal homeostasis through regulation of natriuresis, diuresis, and vasodilation. In vitro, promotes the production of cGMP and induces vasodilation. May promote natriuresis, at least in part, by enhancing prostaglandin E2 synthesis resulting in the inhibition of renal Na+-K+-ATPase. However reports on the involvement of this peptide in mammal blood volume and blood pressure homeostasis are conflicting; according to a report it is not sufficient to activate cGMP and does not inhibit collecting duct transport nor effect diuresis and natriuresis. Appears to bind to specific receptors that are distinct from the receptors bound by the atrial natriuretic and long-acting natriuretic peptides. Possibly functions in protein excretion in urine by maintaining the integrity of the proximal tubules and enhancing protein excretion by decreasing proximal tubular protein reabsorption. Functionally, may have a role in cardio-renal homeostasis through regulation of diuresis and inhibiting aldosterone synthesis. In vitro, promotes the production of cGMP and induces vasodilation. May promote natriuresis, at least in part, by enhancing prostaglandin E2 synthesis resulting in the inhibition of renal Na+-K+-ATPase. May have a role in potassium excretion but not sodium excretion (natriuresis). Possibly enhances protein excretion in urine by decreasing proximal tubular protein reabsorption. Its function is as follows. Hormone produced in the kidneys that appears to be important for maintaining cardio-renal homeostasis. Mediates vasodilation, natriuresis and diuresis primarily in the renal system, in order to maintain the extracellular fluid volume and control the fluid-electrolyte balance. Specifically binds and stimulates cGMP production by renal transmembrane receptors, likely NPR1. Urodilatin not ANP, may be the natriuretic peptide responsible for the regulation of sodium and water homeostasis in the kidney. In terms of biological role, may have a role in cardio-renal homeostasis through regulation of natriuresis and vasodilation. In vivo promotes natriuresis and in vitro, vasodilates renal artery strips. May have a role in cardio-renal homeostasis through regulation of regulation of natriuresis and vasodilation. In vivo promotes natriuresis. In vitro, vasodilates intestinal smooth muscle but not smooth muscle strips. Functionally, may have a role in cardio-renal homeostasis through regulation of natriuresis and vasodilation. In vivo promotes natriuresis. In vitro, selectively vasodilates intestinal and vascular smooth muscle strips. Its function is as follows. May have a role in cardio-renal homeostasis through regulation of natriuresis and vasodilation. In vivo promotes natriuresis. In vitro, selectively vasodilates intestinal smooth muscle but not vascular smooth muscle strips. The chain is Natriuretic peptides A (NPPA) from Equus caballus (Horse).